A 926-amino-acid chain; its full sequence is Probable Xaa-Pro aminopeptidase PTT_10145 (926 aa).

Mn(2+)-binding residues include D274, D285, E435, and E476. Disordered stretches follow at residues 505-538 (GNPGTTEILNPSPTPPRRMRSENRTPRLRAPGIS), 595-615 (KRDSVPTAPSRPTKAKNLSPV), 668-696 (SSSTQTSPKPMTVPTFESRQKSHTVEEKH), 711-741 (IGQSNRAIGPEERRRKAQSDHHHHSRLKAAT), and 865-926 (MPVL…FLTR). Positions 506–515 (NPGTTEILNP) are enriched in polar residues. 2 stretches are compositionally biased toward basic and acidic residues: residues 685 to 696 (SRQKSHTVEEKH) and 719 to 730 (GPEERRRKAQSD). Residues 887 to 897 (NNATNKRSMID) are compositionally biased toward polar residues. Residues 900–915 (PAERRTRPERPERPAR) show a composition bias toward basic and acidic residues.

The protein belongs to the peptidase M24B family. Mn(2+) serves as cofactor.

The enzyme catalyses Release of any N-terminal amino acid, including proline, that is linked to proline, even from a dipeptide or tripeptide.. Functionally, catalyzes the removal of a penultimate prolyl residue from the N-termini of peptides. This chain is Probable Xaa-Pro aminopeptidase PTT_10145, found in Pyrenophora teres f. teres (strain 0-1) (Barley net blotch fungus).